The chain runs to 177 residues: Large ribosomal subunit protein uL6 (177 aa).

It belongs to the universal ribosomal protein uL6 family. As to quaternary structure, part of the 50S ribosomal subunit.

Functionally, this protein binds to the 23S rRNA, and is important in its secondary structure. It is located near the subunit interface in the base of the L7/L12 stalk, and near the tRNA binding site of the peptidyltransferase center. This Variovorax paradoxus (strain S110) protein is Large ribosomal subunit protein uL6.